The primary structure comprises 426 residues: Immunoglobulin mu Fc receptor (426 aa).

The first 16 residues, 1-16 (MNLWLWLLYFLPVSGT), serve as a signal peptide directing secretion. One can recognise an Ig-like domain in the interval 24–121 (RLEVELGGSV…GKTQKVTLNV (98 aa)). Intrachain disulfides connect cysteine 37–cysteine 103 and cysteine 49–cysteine 58. A Phosphothreonine modification is found at threonine 91. Residues 178-212 (KTEAPPVHQPSTNTSVSRHPRVYGASSETPTKPSA) form a disordered region. Residues 267-287 (FHILIPTFLGFLLLVLLGLVV) form a helical membrane-spanning segment. Disordered regions lie at residues 306–346 (RRMR…REPD) and 401–426 (DSNDYINIPGLPHLPSKPPGPRPSRQ). Residues 415 to 426 (PSKPPGPRPSRQ) are compositionally biased toward pro residues.

As to quaternary structure, interacts (via Ig-like domain) with IGHM (via CH4/Cmu4 domain), both secreted and membrane-bound IgM; the interaction is glycan-independent and multivalent theoretically involving up to eight binding sites for the IgM pentamer. In terms of processing, phosphorylated on both Tyr and Ser residues. O-glycosylated. Sialylated. O-linked glycans regulate trafficking to the plasma membrane.

It is found in the cell membrane. The protein resides in the early endosome membrane. Its subcellular location is the golgi apparatus. It localises to the trans-Golgi network membrane. The protein localises to the lysosome membrane. Functionally, high-affinity Fc receptor for immunoglobulin M (IgM), both secreted and membrane-bound IgM. Primarily regulates IgM transport and homeostasis. In lymphoid cells, enables exocytosis of membrane-bound IgM on the plasma membrane as well as endocytosis of IgM-antigen complexes toward lysosomes for degradation. In mucosal epithelium, mediates retrotranscytosis of antigen-IgM complexes across mucosal M cells toward antigen-presenting cells in mucosal lymphoid tissues. Triggers costimulatory signaling and mediates most of IgM effector functions involved in B cell development and primary immune response to infection. Likely limits tonic IgM BCR signaling to self-antigens for proper negative selection of autoreactive B cells in the bone marrow and for the maintenance of regulatory B cell pool in peripheral lymphoid organs. Mediates antibody responses to T cell-dependent and T cell-independent antigens and promotes induction of an efficient neutralizing IgG response. Engages in cross-talk with antigen-receptor signaling via the non-canonical NF-kappa-B, MAP kinases and calcium signaling pathways. The sequence is that of Immunoglobulin mu Fc receptor from Rattus norvegicus (Rat).